The chain runs to 159 residues: MSRRNCWICKMCRDESKRPPSNLTLEEVLQWAQSFENLMATKYGPVVYAAYLKMEHSDENIQFWMACETYKKIASRWSRISRAKKLYKIYIQPQSPREINIDSSTRETIIRNIQEPTETCFEEAQKIVYMHMERDSYPRFLKSEMYQKLLKTMQSNNSF.

An RGS domain is found at 34-150; sequence SFENLMATKY…LKSEMYQKLL (117 aa).

Inhibits signal transduction by increasing the GTPase activity of G protein alpha subunits thereby driving them into their inactive GDP-bound form. Binds to both G(i)-alpha and G(q)-alpha. In Homo sapiens (Human), this protein is Regulator of G-protein signaling 13 (RGS13).